A 154-amino-acid chain; its full sequence is Ribosome maturation factor RimP (154 aa).

Belongs to the RimP family.

It localises to the cytoplasm. Functionally, required for maturation of 30S ribosomal subunits. This is Ribosome maturation factor RimP from Acetivibrio thermocellus (strain ATCC 27405 / DSM 1237 / JCM 9322 / NBRC 103400 / NCIMB 10682 / NRRL B-4536 / VPI 7372) (Clostridium thermocellum).